A 160-amino-acid chain; its full sequence is Eukaryotic translation initiation factor 5A-3 (160 aa).

Over residues 1–12 the composition is skewed to basic and acidic residues; that stretch reads MSDEEHHFESKA. The interval 1 to 21 is disordered; sequence MSDEEHHFESKADAGASKTYP. Lys-52 bears the Hypusine mark.

This sequence belongs to the eIF-5A family. Post-translationally, lys-52 undergoes hypusination, a unique post-translational modification that consists in the addition of a butylamino group from spermidine to lysine side chain, leading to the formation of the unusual amino acid hypusine. eIF-5As are the only known proteins to undergo this modification, which is essential for their function.

Functionally, translation factor that promotes translation elongation and termination, particularly upon ribosome stalling at specific amino acid sequence contexts. Binds between the exit (E) and peptidyl (P) site of the ribosome and promotes rescue of stalled ribosome: specifically required for efficient translation of polyproline-containing peptides as well as other motifs that stall the ribosome. Acts as a ribosome quality control (RQC) cofactor by joining the RQC complex to facilitate peptidyl transfer during CAT tailing step. The polypeptide is Eukaryotic translation initiation factor 5A-3 (EIF5A3) (Solanum tuberosum (Potato)).